The chain runs to 97 residues: uncharacterized protein (97 aa).

2 disordered regions span residues 1-20 (MTEG…IASD) and 52-97 (VPAA…GRRA).

This is an uncharacterized protein from Paracoccus pantotrophus (Thiosphaera pantotropha).